The primary structure comprises 78 residues: Large ribosomal subunit protein bL28 (78 aa).

The protein belongs to the bacterial ribosomal protein bL28 family.

The polypeptide is Large ribosomal subunit protein bL28 (Bordetella avium (strain 197N)).